Here is a 267-residue protein sequence, read N- to C-terminus: Hydroxynaphthalene reductase-like protein Arp2 (267 aa).

Ile25, Asn45, Asp71, and Asn98 together coordinate NADP(+). Active-site proton donor residues include Ser147 and Ser148. 4 residues coordinate NADP(+): Tyr162, Lys166, Val195, and Thr197. Tyr162 acts as the Proton acceptor in catalysis. The active-site Lowers pKa of active site Tyr is Lys166.

The protein belongs to the short-chain dehydrogenases/reductases (SDR) family.

Its function is as follows. Hydroxynaphthalene reductase-like protein; part of the Pks2 gene cluster that mediates the formation of infectious structures (appressoria), enabling these fungi to kill insects faster. The product of the Pks2 gene cluster is different from the one of Pks1 and has still not been identified. This is Hydroxynaphthalene reductase-like protein Arp2 from Metarhizium majus (strain ARSEF 297).